The following is a 780-amino-acid chain: ATP-dependent 6-phosphofructokinase, muscle type (780 aa).

Thr2 carries the N-acetylthreonine modification. The segment at 2-390 (THEEHHAAKS…NWEVYKLLAH (389 aa)) is N-terminal catalytic PFK domain 1. ATP-binding positions include Gly25, 88–89 (RC), and 118–121 (GDGS). Asp119 is a Mg(2+) binding site. Residues 164–166 (SID), Arg201, 208–210 (MGR), Glu264, Arg292, and 298–301 (HVQR) contribute to the substrate site. Asp166 serves as the catalytic Proton acceptor. Ser377 bears the Phosphoserine mark. Positions 391–401 (VRPPVTKSGSY) are interdomain linker. Residues 402 to 780 (TVAVMNVGAP…TRKRSGEATI (379 aa)) form a C-terminal regulatory PFK domain 2 region. Beta-D-fructose 2,6-bisphosphate is bound by residues Arg471 and 528–532 (TVSNN). Residue Ser530 is glycosylated (O-linked (GlcNAc) serine). Position 557 is an N6-(2-hydroxyisobutyryl)lysine (Lys557). Beta-D-fructose 2,6-bisphosphate is bound by residues Arg566, 573-575 (MGG), Glu629, Arg655, and 661-664 (HMQQ). The residue at position 667 (Ser667) is a Phosphoserine. Arg735 serves as a coordination point for beta-D-fructose 2,6-bisphosphate. Residue Ser775 is modified to Phosphoserine.

The protein belongs to the phosphofructokinase type A (PFKA) family. ATP-dependent PFK group I subfamily. Eukaryotic two domain clade 'E' sub-subfamily. Homo- and heterotetramers. Phosphofructokinase (PFK) enzyme functions as a tetramer composed of different combinations of 3 types of subunits, called PFKM (M), PFKL (L) and PFKP (P). The composition of the PFK tetramer differs according to the tissue type it is present in. The kinetic and regulatory properties of the tetrameric enzyme are dependent on the subunit composition, hence can vary across tissues. Interacts (via C-terminus) with HK1 (via N-terminal spermatogenic cell-specific region). Mg(2+) is required as a cofactor. In terms of processing, glcNAcylation decreases enzyme activity.

The protein localises to the cytoplasm. The catalysed reaction is beta-D-fructose 6-phosphate + ATP = beta-D-fructose 1,6-bisphosphate + ADP + H(+). Its pathway is carbohydrate degradation; glycolysis; D-glyceraldehyde 3-phosphate and glycerone phosphate from D-glucose: step 3/4. With respect to regulation, allosterically activated by ADP, AMP, or fructose 2,6-bisphosphate, and allosterically inhibited by ATP or citrate. Catalyzes the phosphorylation of D-fructose 6-phosphate to fructose 1,6-bisphosphate by ATP, the first committing step of glycolysis. This chain is ATP-dependent 6-phosphofructokinase, muscle type (PFKM), found in Sus scrofa (Pig).